Consider the following 102-residue polypeptide: NADH-quinone oxidoreductase subunit K (102 aa).

The next 3 membrane-spanning stretches (helical) occupy residues 5 to 25 (IAHY…GIFL), 31 to 51 (IVIL…FVAF), and 66 to 86 (FVLT…VVFF).

Belongs to the complex I subunit 4L family. As to quaternary structure, NDH-1 is composed of 14 different subunits. Subunits NuoA, H, J, K, L, M, N constitute the membrane sector of the complex.

Its subcellular location is the cell inner membrane. The enzyme catalyses a quinone + NADH + 5 H(+)(in) = a quinol + NAD(+) + 4 H(+)(out). Functionally, NDH-1 shuttles electrons from NADH, via FMN and iron-sulfur (Fe-S) centers, to quinones in the respiratory chain. The immediate electron acceptor for the enzyme in this species is believed to be ubiquinone. Couples the redox reaction to proton translocation (for every two electrons transferred, four hydrogen ions are translocated across the cytoplasmic membrane), and thus conserves the redox energy in a proton gradient. This is NADH-quinone oxidoreductase subunit K from Brucella abortus (strain S19).